The following is a 333-amino-acid chain: Diaminopimelate epimerase (333 aa).

Substrate contacts are provided by asparagine 24 and asparagine 79. Cysteine 88 functions as the Proton donor in the catalytic mechanism. Residues 89 to 90 (GN), asparagine 176, asparagine 210, and 228 to 229 (ER) contribute to the substrate site. Residue cysteine 237 is the Proton acceptor of the active site. 238 to 239 (GT) is a binding site for substrate.

It belongs to the diaminopimelate epimerase family. Homodimer.

The protein resides in the cytoplasm. It catalyses the reaction (2S,6S)-2,6-diaminopimelate = meso-2,6-diaminopimelate. It functions in the pathway amino-acid biosynthesis; L-lysine biosynthesis via DAP pathway; DL-2,6-diaminopimelate from LL-2,6-diaminopimelate: step 1/1. Catalyzes the stereoinversion of LL-2,6-diaminopimelate (L,L-DAP) to meso-diaminopimelate (meso-DAP), a precursor of L-lysine and an essential component of the bacterial peptidoglycan. The protein is Diaminopimelate epimerase of Clostridium acetobutylicum (strain ATCC 824 / DSM 792 / JCM 1419 / IAM 19013 / LMG 5710 / NBRC 13948 / NRRL B-527 / VKM B-1787 / 2291 / W).